The primary structure comprises 445 residues: Phosphoglucosamine mutase (445 aa).

Catalysis depends on Ser-102, which acts as the Phosphoserine intermediate. 4 residues coordinate Mg(2+): Ser-102, Asp-241, Asp-243, and Asp-245. At Ser-102 the chain carries Phosphoserine.

This sequence belongs to the phosphohexose mutase family. Mg(2+) is required as a cofactor. Activated by phosphorylation.

It catalyses the reaction alpha-D-glucosamine 1-phosphate = D-glucosamine 6-phosphate. Its function is as follows. Catalyzes the conversion of glucosamine-6-phosphate to glucosamine-1-phosphate. In Sodalis glossinidius (strain morsitans), this protein is Phosphoglucosamine mutase.